The following is a 306-amino-acid chain: Beta-lactamase (306 aa).

Residues 1–36 (MKLKTKASIKFGICVGLLCLSITGFTPFFNSTHAEA) form the signal peptide. Ser-89 (acyl-ester intermediate) is an active-site residue. 251–253 (KSG) serves as a coordination point for substrate.

Belongs to the class-A beta-lactamase family.

The protein resides in the secreted. It catalyses the reaction a beta-lactam + H2O = a substituted beta-amino acid. This protein is a beta-lactamase with a substrate specificity for penicillins. The chain is Beta-lactamase (penP) from Bacillus subtilis (strain 168).